The primary structure comprises 344 residues: Calcium homeostasis modulator protein 3 (344 aa).

Over Met1–Asn20 the chain is Cytoplasmic. Residues Gln9–Ser36 form a central pore region. A helical transmembrane segment spans residues Gly21 to Ser36. At Phe37–Asn48 the chain is on the extracellular side. 2 disulfides stabilise this stretch: Cys41–Cys126 and Cys43–Cys157. The helical transmembrane segment at Ala49 to Asn71 threads the bilayer. At Arg72–Met98 the chain is on the cytoplasmic side. Cys99 carries the S-palmitoyl cysteine lipid modification. Residues Cys99–Phe124 form a helical membrane-spanning segment. The Extracellular segment spans residues Val125 to Leu176. N-linked (GlcNAc...) asparagine glycosylation occurs at Asn142. A helical membrane pass occupies residues Arg177 to Arg202. Residues Cys200 and Cys204 are each lipidated (S-palmitoyl cysteine). Residues Pro203–Val344 are Cytoplasmic-facing.

Belongs to the CALHM family. As to quaternary structure, associates with CALHM1 as a pore-forming subunit in a hetero-hexameric channel complex. N-glycosylated. Post-translationally, palmitoylated by ZDHHC3 and ZDHHC15. Palmitoylation positively regulates CALHM1:CALHM3 channel conductance. Specifically expressed in circumvallate taste bud cells.

Its subcellular location is the basolateral cell membrane. The enzyme catalyses ATP(in) = ATP(out). The catalysed reaction is Ca(2+)(in) = Ca(2+)(out). It catalyses the reaction Na(+)(in) = Na(+)(out). It carries out the reaction K(+)(in) = K(+)(out). The enzyme catalyses chloride(in) = chloride(out). Pore-forming subunit of gustatory voltage-gated ion channels required for sensory perception of sweet, bitter and umami tastes. With CALHM1 forms a fast-activating voltage-gated ATP-release channel in type II taste bud cells, ATP acting as a neurotransmitter to activate afferent neural gustatory pathways. Acts both as a voltage-gated and calcium-activated ion channel: mediates neuronal excitability in response to membrane depolarization and low extracellular Ca(2+) concentration. Has poor ion selectivity and forms a wide pore (around 14 Angstroms) that mediates permeation of small ions including Ca(2+), Na(+), K(+) and Cl(-), as well as larger ions such as ATP(4-). The protein is Calcium homeostasis modulator protein 3 of Homo sapiens (Human).